The chain runs to 105 residues: Urease subunit gamma (105 aa).

The protein belongs to the urease gamma subunit family. Heterotrimer of UreA (gamma), UreB (beta) and UreC (alpha) subunits. Three heterotrimers associate to form the active enzyme.

Its subcellular location is the cytoplasm. The enzyme catalyses urea + 2 H2O + H(+) = hydrogencarbonate + 2 NH4(+). It participates in nitrogen metabolism; urea degradation; CO(2) and NH(3) from urea (urease route): step 1/1. The chain is Urease subunit gamma from Bacillus subtilis (strain 168).